A 514-amino-acid chain; its full sequence is Pantothenate transporter liz1 (514 aa).

Helical transmembrane passes span 24–44 (LLIK…FINY), 72–92 (INVV…YALQ), 98–118 (LWFS…FAVH), 128–148 (FFMA…LGAW), 159–179 (GIFS…QTAV), 194–214 (WLFI…LFLF), 263–283 (GLCI…NVLM), 300–320 (NYPT…SVIS), 329–349 (WPFG…LLAW), 357–377 (FFAY…FSWA), 390–410 (VVVF…APIM), and 423–443 (LIGL…VSYM).

It belongs to the major facilitator superfamily. Allantoate permease family.

The protein localises to the cell membrane. Its function is as follows. Transports pantothenate into the cell. In Schizosaccharomyces pombe (strain 972 / ATCC 24843) (Fission yeast), this protein is Pantothenate transporter liz1 (liz1).